We begin with the raw amino-acid sequence, 177 residues long: Nucleoside triphosphate/diphosphate phosphatase (177 aa).

The Proton donor role is filled by R23. Mg(2+)-binding residues include N87, D103, D105, D107, D120, and E123.

It belongs to the Ntdp family. The cofactor is Mg(2+).

The catalysed reaction is a ribonucleoside 5'-triphosphate + H2O = a ribonucleoside 5'-diphosphate + phosphate + H(+). It carries out the reaction a ribonucleoside 5'-diphosphate + H2O = a ribonucleoside 5'-phosphate + phosphate + H(+). Its function is as follows. Has nucleoside phosphatase activity towards nucleoside triphosphates and nucleoside diphosphates. The polypeptide is Nucleoside triphosphate/diphosphate phosphatase (Enterococcus faecalis (strain ATCC 700802 / V583)).